The primary structure comprises 428 residues: Leucine-rich repeat-containing protein 42 (428 aa).

LRR repeat units follow at residues 149-170 (VLCS…EEIK), 174-195 (ELTC…LEHL), 202-222 (SVTQ…RKMT), 234-255 (NLTL…GYLF), and 259-280 (KLNC…KHKL). Residues 379–412 (KHEAISSQESKKSKKRPFEESETEQNNSSQPSKQ) are disordered. Phosphoserine is present on residues S406 and S407.

Belongs to the LRRC42 family.

This is Leucine-rich repeat-containing protein 42 (LRRC42) from Homo sapiens (Human).